An 88-amino-acid chain; its full sequence is Large ribosomal subunit protein bL31B (88 aa).

Belongs to the bacterial ribosomal protein bL31 family. Type B subfamily. In terms of assembly, part of the 50S ribosomal subunit.

The polypeptide is Large ribosomal subunit protein bL31B (Burkholderia orbicola (strain MC0-3)).